The following is a 722-amino-acid chain: Polyribonucleotide nucleotidyltransferase (722 aa).

Mg(2+) is bound by residues Asp-495 and Asp-501. Residues 562–621 enclose the KH domain; sequence PRLLSFRIDPELIGTVIGPGGRTIKGITERTNTKIDIEDGGIVTIASHDGVAAEEAQKII. Positions 631-699 constitute an S1 motif domain; the sequence is GEIFTGSITR…NRGRINLTLR (69 aa). Polar residues predominate over residues 701–711; the sequence is VSQNNNDMNYP. Residues 701-722 form a disordered region; the sequence is VSQNNNDMNYPQPTPTPVAPLN. Residues 712 to 722 show a composition bias toward pro residues; sequence QPTPTPVAPLN.

The protein belongs to the polyribonucleotide nucleotidyltransferase family. Requires Mg(2+) as cofactor.

It is found in the cytoplasm. The catalysed reaction is RNA(n+1) + phosphate = RNA(n) + a ribonucleoside 5'-diphosphate. Its function is as follows. Involved in mRNA degradation. Catalyzes the phosphorolysis of single-stranded polyribonucleotides processively in the 3'- to 5'-direction. The polypeptide is Polyribonucleotide nucleotidyltransferase (Prochlorococcus marinus (strain MIT 9211)).